The sequence spans 400 residues: tRNA(Met) cytidine acetate ligase (400 aa).

ATP contacts are provided by residues 7–20 (IVEYNPFHNGHLYH), Gly101, Asn159, and Arg184.

Belongs to the TmcAL family.

The protein resides in the cytoplasm. It carries out the reaction cytidine(34) in elongator tRNA(Met) + acetate + ATP = N(4)-acetylcytidine(34) in elongator tRNA(Met) + AMP + diphosphate. Catalyzes the formation of N(4)-acetylcytidine (ac(4)C) at the wobble position of elongator tRNA(Met), using acetate and ATP as substrates. First activates an acetate ion to form acetyladenylate (Ac-AMP) and then transfers the acetyl group to tRNA to form ac(4)C34. The chain is tRNA(Met) cytidine acetate ligase from Caldicellulosiruptor saccharolyticus (strain ATCC 43494 / DSM 8903 / Tp8T 6331).